Reading from the N-terminus, the 279-residue chain is HTH-type transcriptional regulator HdfR (279 aa).

An HTH lysR-type domain is found at 1–58 (MDTELLKTFLEVSRTRHFGRAAESLYLTQSAVSFRIRQLENQLGVNLFTRHRNNIRLT). A DNA-binding region (H-T-H motif) is located at residues 18-37 (FGRAAESLYLTQSAVSFRIR).

It belongs to the LysR transcriptional regulatory family.

Negatively regulates the transcription of the flagellar master operon flhDC by binding to the upstream region of the operon. This chain is HTH-type transcriptional regulator HdfR, found in Escherichia coli O17:K52:H18 (strain UMN026 / ExPEC).